Reading from the N-terminus, the 33-residue chain is Photosystem II reaction center protein Psb30 (33 aa).

A helical membrane pass occupies residues 5–25 (VIAQLTVLALIVASGPLVIAL).

It belongs to the Psb30/Ycf12 family. As to quaternary structure, PSII is composed of 1 copy each of membrane proteins PsbA, PsbB, PsbC, PsbD, PsbE, PsbF, PsbH, PsbI, PsbJ, PsbK, PsbL, PsbM, PsbT, PsbX, PsbY, PsbZ, Psb30/Ycf12, peripheral proteins of the oxygen-evolving complex and a large number of cofactors. It forms dimeric complexes.

It is found in the plastid. The protein resides in the chloroplast thylakoid membrane. In terms of biological role, a core subunit of photosystem II (PSII), probably helps stabilize the reaction center. The sequence is that of Photosystem II reaction center protein Psb30 from Marchantia polymorpha (Common liverwort).